The following is a 537-amino-acid chain: MTGKTAPAAAKKAPAAKKAPAPASKKAPEPAPKEKPAPTPKEGHAPTPKEEHAPPPKEEHAPPPKEEHAPAPAAETPPAPEHPPDAEQPAAPAAEHAPTPTHEAAPAHEEGPPPAAPAEAPAPEPEPEKPKEEPPSVPLSLAVEEVTENSVTLTWKAPEHTGKSSLDGYVVEICKDGSTDWTAVNKEPFLSTRYKIHDLASGEKVHVRVKAISASGTSDPATLEQPVLIREITDLPRIRLPRQLRQVYVRHVGEAVNLLIPFQGKPQPQVTWTKDNQPLDTSRVNIRNTDKDTIFFIRTAQRSDSGKYQLSVRINGAEDKAILDIRVIERPGPPQNLKLVDVWGFNVALEWSPPADNGNSEIKGYTVQKSDKKSGKWFTVLERCTRTSCTISDLIIGNTYSFRVFSENACGMSETAAVAAGVAHIKKTVYQPQKIPERDMMEPPKFTQPLTDRATTRGYSTHLFCSVRGFPQPKIIWMKNKMEIREDPKYIAMIEQGVCSLEIRKPSPFDAGVYTCKAVNPLGEASVDCKLDVKMPK.

Low complexity predominate over residues 1-25 (MTGKTAPAAAKKAPAAKKAPAPASK). The interval 1 to 138 (MTGKTAPAAA…KPKEEPPSVP (138 aa)) is disordered. Residues 26–69 (KAPEPAPKEKPAPTPKEGHAPTPKEEHAPPPKEEHAPPPKEEHA) are compositionally biased toward basic and acidic residues. Residues 87 to 104 (EQPAAPAAEHAPTPTHEA) are compositionally biased toward low complexity. Positions 112 to 124 (PPPAAPAEAPAPE) are enriched in pro residues. One can recognise a Fibronectin type-III 1 domain in the interval 137–232 (VPLSLAVEEV…LEQPVLIREI (96 aa)). The region spanning 236-324 (PRIRLPRQLR…NGAEDKAILD (89 aa)) is the Ig-like C2-type 1 domain. The Fibronectin type-III 2 domain occupies 333–428 (PPQNLKLVDV…AAGVAHIKKT (96 aa)). Residues 444–528 (PKFTQPLTDR…VNPLGEASVD (85 aa)) form the Ig-like C2-type 2 domain.

This sequence belongs to the immunoglobulin superfamily. MyBP family. In terms of tissue distribution, skeletal muscle. Seems to be also expressed in the slow tonic ald muscle. Not detected in gizzard or heart.

Binds to myosin; probably involved in interaction with thick myofilaments in the A-band. The chain is Myosin-binding protein H (MYBPH) from Gallus gallus (Chicken).